A 380-amino-acid polypeptide reads, in one-letter code: Cytochrome b (380 aa).

Helical transmembrane passes span 34-54 (FGSL…LLAT), 78-99 (WLIR…YLHI), 114-134 (WNTG…GYVL), and 179-199 (FFAL…IHLT). Heme b-binding residues include His-84 and His-98. The heme b site is built by His-183 and His-197. His-202 is an a ubiquinone binding site. The next 4 helical transmembrane spans lie at 227–247 (LKDI…ALFS), 289–309 (LGGV…PLLH), 321–341 (LSQL…WVGS), and 348–368 (FIII…LLFP).

It belongs to the cytochrome b family. In terms of assembly, the cytochrome bc1 complex contains 11 subunits: 3 respiratory subunits (MT-CYB, CYC1 and UQCRFS1), 2 core proteins (UQCRC1 and UQCRC2) and 6 low-molecular weight proteins (UQCRH/QCR6, UQCRB/QCR7, UQCRQ/QCR8, UQCR10/QCR9, UQCR11/QCR10 and a cleavage product of UQCRFS1). This cytochrome bc1 complex then forms a dimer. It depends on heme b as a cofactor.

It localises to the mitochondrion inner membrane. Component of the ubiquinol-cytochrome c reductase complex (complex III or cytochrome b-c1 complex) that is part of the mitochondrial respiratory chain. The b-c1 complex mediates electron transfer from ubiquinol to cytochrome c. Contributes to the generation of a proton gradient across the mitochondrial membrane that is then used for ATP synthesis. This chain is Cytochrome b (MT-CYB), found in Uria aalge (Common mure).